A 188-amino-acid polypeptide reads, in one-letter code: Segregation and condensation protein B (188 aa).

Belongs to the ScpB family. In terms of assembly, homodimer. Homodimerization may be required to stabilize the binding of ScpA to the Smc head domains. Component of a cohesin-like complex composed of ScpA, ScpB and the Smc homodimer, in which ScpA and ScpB bind to the head domain of Smc. The presence of the three proteins is required for the association of the complex with DNA.

It localises to the cytoplasm. Functionally, participates in chromosomal partition during cell division. May act via the formation of a condensin-like complex containing Smc and ScpA that pull DNA away from mid-cell into both cell halves. In Lactococcus lactis subsp. lactis (strain IL1403) (Streptococcus lactis), this protein is Segregation and condensation protein B.